The sequence spans 216 residues: Small ribosomal subunit protein uS5 (216 aa).

The disordered stretch occupies residues 1 to 55; the sequence is MDKKLENQKDLLNQDPKVELNSQSVAKNPLNSREVKPIQRRRPLRKNARDKNSKP. Polar residues predominate over residues 20–31; sequence LNSQSVAKNPLN. In terms of domain architecture, S5 DRBM spans 57–120; it reads FEERVIAIHR…KDAQNRLVSV (64 aa).

The protein belongs to the universal ribosomal protein uS5 family. As to quaternary structure, part of the 30S ribosomal subunit. Contacts proteins S4 and S8.

Functionally, with S4 and S12 plays an important role in translational accuracy. In terms of biological role, located at the back of the 30S subunit body where it stabilizes the conformation of the head with respect to the body. This Mesomycoplasma hyopneumoniae (strain 7448) (Mycoplasma hyopneumoniae) protein is Small ribosomal subunit protein uS5.